Here is a 414-residue protein sequence, read N- to C-terminus: 5-aminolevulinate synthase (414 aa).

Residues R22, S133, and K152 each contribute to the substrate site. Pyridoxal 5'-phosphate-binding residues include S185, H213, and T241. Residue K244 is part of the active site. Residue K244 is modified to N6-(pyridoxal phosphate)lysine. Residues T273 and T274 each contribute to the pyridoxal 5'-phosphate site. T359 is a substrate binding site.

It belongs to the class-II pyridoxal-phosphate-dependent aminotransferase family. As to quaternary structure, homodimer. It depends on pyridoxal 5'-phosphate as a cofactor.

The catalysed reaction is succinyl-CoA + glycine + H(+) = 5-aminolevulinate + CO2 + CoA. It functions in the pathway porphyrin-containing compound metabolism; protoporphyrin-IX biosynthesis; 5-aminolevulinate from glycine: step 1/1. This chain is 5-aminolevulinate synthase (hemA), found in Rickettsia prowazekii (strain Madrid E).